The sequence spans 505 residues: ATP synthase subunit alpha (505 aa).

ATP is bound at residue 170 to 177; that stretch reads GDRQTGKS.

This sequence belongs to the ATPase alpha/beta chains family. F-type ATPases have 2 components, CF(1) - the catalytic core - and CF(0) - the membrane proton channel. CF(1) has five subunits: alpha(3), beta(3), gamma(1), delta(1), epsilon(1). CF(0) has four main subunits: a(1), b(1), b'(1) and c(9-12).

It is found in the cellular thylakoid membrane. It catalyses the reaction ATP + H2O + 4 H(+)(in) = ADP + phosphate + 5 H(+)(out). Functionally, produces ATP from ADP in the presence of a proton gradient across the membrane. The alpha chain is a regulatory subunit. This Prochlorococcus marinus (strain MIT 9215) protein is ATP synthase subunit alpha.